The primary structure comprises 779 residues: Endonuclease MutS2 (779 aa).

328 to 335 (GPNTGGKT) is a binding site for ATP. Residues 704-779 (LDLRGKRYEE…GSGATIVTLG (76 aa)) enclose the Smr domain.

The protein belongs to the DNA mismatch repair MutS family. MutS2 subfamily. In terms of assembly, homodimer. Binds to stalled ribosomes, contacting rRNA.

Its function is as follows. Endonuclease that is involved in the suppression of homologous recombination and thus may have a key role in the control of bacterial genetic diversity. In terms of biological role, acts as a ribosome collision sensor, splitting the ribosome into its 2 subunits. Detects stalled/collided 70S ribosomes which it binds and splits by an ATP-hydrolysis driven conformational change. Acts upstream of the ribosome quality control system (RQC), a ribosome-associated complex that mediates the extraction of incompletely synthesized nascent chains from stalled ribosomes and their subsequent degradation. Probably generates substrates for RQC. The chain is Endonuclease MutS2 from Streptococcus pyogenes serotype M49 (strain NZ131).